Reading from the N-terminus, the 206-residue chain is Imidazoleglycerol-phosphate dehydratase (206 aa).

A disordered region spans residues 1–21 (MTTPSTAPTPAPRKAEVSRNT).

This sequence belongs to the imidazoleglycerol-phosphate dehydratase family.

The protein localises to the cytoplasm. The catalysed reaction is D-erythro-1-(imidazol-4-yl)glycerol 3-phosphate = 3-(imidazol-4-yl)-2-oxopropyl phosphate + H2O. The protein operates within amino-acid biosynthesis; L-histidine biosynthesis; L-histidine from 5-phospho-alpha-D-ribose 1-diphosphate: step 6/9. The sequence is that of Imidazoleglycerol-phosphate dehydratase from Polaromonas sp. (strain JS666 / ATCC BAA-500).